We begin with the raw amino-acid sequence, 1043 residues long: Ack-related non-receptor tyrosine kinase (1043 aa).

The region spanning 113–379 (ITLCKELGQG…SDIVAKFPER (267 aa)) is the Protein kinase domain. ATP contacts are provided by residues 119–127 (LGQGEFGSV) and Lys146. Asp241 (proton acceptor) is an active-site residue. Residues 379–444 (RRAQSVRAVV…RPTDTVAHLG (66 aa)) enclose the SH3 domain. The disordered stretch occupies residues 443–481 (LGSEPPCSNGTIENGFSEKEKGGKKNKKAEKESERERKK). Residues 458–481 (FSEKEKGGKKNKKAEKESERERKK) show a composition bias toward basic and acidic residues. In terms of domain architecture, CRIB spans 484 to 498 (ISEPVGDVRHTCHVG). Disordered stretches follow at residues 514–644 (MCPT…SAAN), 790–842 (KINE…GWSS), 859–898 (KQAS…LSVR), and 932–993 (LIDG…RQFP). The span at 516–543 (PTSSSPSTSRGSQASPAPSHTSSSTTSS) shows a compositional bias: low complexity. Polar residues predominate over residues 610-624 (GNQHSVQVHDQFSSL). Residues 630–644 (SLTPTAPPLTASAAN) show a composition bias toward low complexity. Residues 785–812 (EQEVRKINEKSAREHRKTEDLLREERQK) adopt a coiled-coil conformation. The segment covering 790-818 (KINEKSAREHRKTEDLLREERQKEQKPGE) has biased composition (basic and acidic residues). The segment covering 825 to 842 (PAESLYSTRTPQQEGWSS) has biased composition (polar residues). A compositionally biased stretch (low complexity) spans 870–884 (PTSSRLSTLDRSSIS).

Belongs to the protein kinase superfamily. Tyr protein kinase family. It depends on Mg(2+) as a cofactor.

It catalyses the reaction L-tyrosyl-[protein] + ATP = O-phospho-L-tyrosyl-[protein] + ADP + H(+). It carries out the reaction L-seryl-[protein] + ATP = O-phospho-L-seryl-[protein] + ADP + H(+). The enzyme catalyses L-threonyl-[protein] + ATP = O-phospho-L-threonyl-[protein] + ADP + H(+). Its function is as follows. Probable tyrosine protein kinase which plays a role in vulva development, probably by acting as a negative regulator of the let-23/EGFR and let-60/ras pathway. Involved in the negative regulation of germline development. In Caenorhabditis elegans, this protein is Ack-related non-receptor tyrosine kinase.